A 154-amino-acid polypeptide reads, in one-letter code: Superoxide dismutase [Cu-Zn] (154 aa).

The Cu cation site is built by His-47, His-49, and His-64. Cys-58 and Cys-147 form a disulfide bridge. His-64, His-72, His-81, and Asp-84 together coordinate Zn(2+). His-121 is a Cu cation binding site. Residues 126 to 137 are compositionally biased toward basic and acidic residues; the sequence is DLGRGGNEESKK. The segment at 126-147 is disordered; the sequence is DLGRGGNEESKKTGNAGPRPAC.

This sequence belongs to the Cu-Zn superoxide dismutase family. In terms of assembly, homodimer. Cu cation is required as a cofactor. The cofactor is Zn(2+).

Its subcellular location is the cytoplasm. The catalysed reaction is 2 superoxide + 2 H(+) = H2O2 + O2. Functionally, destroys radicals which are normally produced within the cells and which are toxic to biological systems. Plays an important role in the phase transition, and may be important in vivo, as it would facilitate the intracellular survival of the fungus by providing a non-toxic environment in the macrophage phagolysosomes. This chain is Superoxide dismutase [Cu-Zn], found in Talaromyces marneffei (Penicillium marneffei).